The chain runs to 153 residues: Endoribonuclease YbeY (153 aa).

Residues His116, His120, and His126 each coordinate Zn(2+).

It belongs to the endoribonuclease YbeY family. Zn(2+) is required as a cofactor.

The protein resides in the cytoplasm. Single strand-specific metallo-endoribonuclease involved in late-stage 70S ribosome quality control and in maturation of the 3' terminus of the 16S rRNA. In Paraburkholderia phymatum (strain DSM 17167 / CIP 108236 / LMG 21445 / STM815) (Burkholderia phymatum), this protein is Endoribonuclease YbeY.